Reading from the N-terminus, the 330-residue chain is tRNA dimethylallyltransferase (330 aa).

Polar residues predominate over residues 1-11 (MDYSHSDSPST). Residues 1–21 (MDYSHSDSPSTAPAGKTPVDQ) are disordered. Position 29-36 (29-36 (GPTGAGKS)) interacts with ATP. 31–36 (TGAGKS) contributes to the substrate binding site. An interaction with substrate tRNA region spans residues 56-59 (DSMQ).

Belongs to the IPP transferase family. As to quaternary structure, monomer. The cofactor is Mg(2+).

The enzyme catalyses adenosine(37) in tRNA + dimethylallyl diphosphate = N(6)-dimethylallyladenosine(37) in tRNA + diphosphate. Its function is as follows. Catalyzes the transfer of a dimethylallyl group onto the adenine at position 37 in tRNAs that read codons beginning with uridine, leading to the formation of N6-(dimethylallyl)adenosine (i(6)A). The sequence is that of tRNA dimethylallyltransferase from Corynebacterium urealyticum (strain ATCC 43042 / DSM 7109).